Here is an 824-residue protein sequence, read N- to C-terminus: Disintegrin and metalloproteinase domain-containing protein 8 (824 aa).

Positions 1 to 16 (MRGLGLWLLGAMMLPA) are cleaved as a signal peptide. Residues 17–655 (IAPSRPWALM…EVHAASGSLP (639 aa)) lie on the Extracellular side of the membrane. Asn67 and Asn91 each carry an N-linked (GlcNAc...) asparagine glycan. One can recognise a Peptidase M12B domain in the interval 200–400 (RYVELYVVVD…PQSVCLANAP (201 aa)). 12 disulfides stabilise this stretch: Cys310-Cys395, Cys351-Cys379, Cys353-Cys362, Cys435-Cys457, Cys448-Cys454, Cys466-Cys486, Cys473-Cys503, Cys498-Cys508, Cys566-Cys613, Cys613-Cys623, Cys617-Cys629, and Cys631-Cys640. His334 provides a ligand contact to Zn(2+). Residue Glu335 is part of the active site. Residues His338 and His344 each coordinate Zn(2+). In terms of domain architecture, Disintegrin spans 408–494 (GPVCGNLFVE…ECPEDAFQEN (87 aa)). Residue Asn436 is glycosylated (N-linked (GlcNAc...) asparagine). One can recognise an EGF-like domain in the interval 609–641 (RSSNCSAQCHNHGVCNHKQECHCHAGWAPPHCA). N-linked (GlcNAc...) asparagine glycosylation is present at Asn612. A helical membrane pass occupies residues 656–676 (VFVVVVLVLLAVVLVTLAGII). Topologically, residues 677–824 (VYRKARSRIL…KQGAGAPTAP (148 aa)) are cytoplasmic. Disordered stretches follow at residues 710–756 (VPAK…PVTV) and 776–824 (KPTF…PTAP). The segment covering 747–756 (RPPPAPPVTV) has biased composition (pro residues). Residues 788-804 (PGAGAANPGPAEGAVGP) show a composition bias toward low complexity.

In terms of assembly, interacts with FST3. Requires Zn(2+) as cofactor. In terms of tissue distribution, expressed on neutrophils and monocytes.

The protein localises to the membrane. Its function is as follows. Possible involvement in extravasation of leukocytes. The sequence is that of Disintegrin and metalloproteinase domain-containing protein 8 (ADAM8) from Homo sapiens (Human).